The sequence spans 274 residues: Large ribosomal subunit protein uL2 (274 aa).

Residues 223 to 274 (VAMNPVDHPHGGGEGRTSGGRHPVTPWGVPTKGYKTRSNKRTDKYIVRRRNK) are disordered.

It belongs to the universal ribosomal protein uL2 family. In terms of assembly, part of the 50S ribosomal subunit. Forms a bridge to the 30S subunit in the 70S ribosome.

Functionally, one of the primary rRNA binding proteins. Required for association of the 30S and 50S subunits to form the 70S ribosome, for tRNA binding and peptide bond formation. It has been suggested to have peptidyltransferase activity; this is somewhat controversial. Makes several contacts with the 16S rRNA in the 70S ribosome. This chain is Large ribosomal subunit protein uL2, found in Shewanella oneidensis (strain ATCC 700550 / JCM 31522 / CIP 106686 / LMG 19005 / NCIMB 14063 / MR-1).